Reading from the N-terminus, the 130-residue chain is uncharacterized protein (130 aa).

An N-terminal signal peptide occupies residues 1–26; the sequence is MINNFKGILIIILSFLFLLLFKYSNA. The N-linked (GlcNAc...) asparagine glycan is linked to asparagine 58.

Belongs to the Dictyostelium gerABC family.

The protein localises to the secreted. This is an uncharacterized protein from Dictyostelium discoideum (Social amoeba).